The chain runs to 601 residues: Protein CT_858 (601 aa).

This sequence belongs to the chlamydial CPn_1016/CT_858/TC_0248 family.

The sequence is that of Protein CT_858 from Chlamydia trachomatis serovar D (strain ATCC VR-885 / DSM 19411 / UW-3/Cx).